The primary structure comprises 133 residues: Small ribosomal subunit protein uS8 (133 aa).

The interval 1–30 is disordered; it reads MANHDPISDMLTRIRNASEKRHETTKVPAS. Basic and acidic residues predominate over residues 16–25; the sequence is NASEKRHETT.

The protein belongs to the universal ribosomal protein uS8 family. In terms of assembly, part of the 30S ribosomal subunit. Contacts proteins S5 and S12.

Functionally, one of the primary rRNA binding proteins, it binds directly to 16S rRNA central domain where it helps coordinate assembly of the platform of the 30S subunit. The chain is Small ribosomal subunit protein uS8 from Synechococcus sp. (strain CC9902).